The sequence spans 214 residues: MSLGLVGRKVGMTRVFAEDGQSIPVTVLDMSANRVTQIKTADTDGYNAVQVAYGSKKANRVLKAEAGHFAKAGVEAGRGLKEFTADAAKLAELKVGDTLTVELFQVGQLVDVTGTSQGKGFSGVIKRHNFSSNRASHGNSVTTRAPGSIGQAQDPGRVFPGKRMAGQYGNVKRTVQSLEVVRIDAERQLLLIKGSVPGSKGNDVVVLPAVKAGA.

A compositionally biased stretch (polar residues) spans 132–145 (SNRASHGNSVTTRA). A disordered region spans residues 132–155 (SNRASHGNSVTTRAPGSIGQAQDP). At Gln153 the chain carries N5-methylglutamine.

The protein belongs to the universal ribosomal protein uL3 family. In terms of assembly, part of the 50S ribosomal subunit. Forms a cluster with proteins L14 and L19. Post-translationally, methylated by PrmB.

Functionally, one of the primary rRNA binding proteins, it binds directly near the 3'-end of the 23S rRNA, where it nucleates assembly of the 50S subunit. The sequence is that of Large ribosomal subunit protein uL3 from Laribacter hongkongensis (strain HLHK9).